We begin with the raw amino-acid sequence, 689 residues long: Glycine--tRNA ligase beta subunit (689 aa).

Belongs to the class-II aminoacyl-tRNA synthetase family. As to quaternary structure, tetramer of two alpha and two beta subunits.

The protein localises to the cytoplasm. It carries out the reaction tRNA(Gly) + glycine + ATP = glycyl-tRNA(Gly) + AMP + diphosphate. The sequence is that of Glycine--tRNA ligase beta subunit from Escherichia coli O127:H6 (strain E2348/69 / EPEC).